We begin with the raw amino-acid sequence, 223 residues long: MTRDRELQALLRLTAWLSPAFPIGSFAYSGGLERAVADGLVTDAALLAAWIGTLVGNGSVWNDAVLLAESHRQQAEAARLAEVAALAEALAGSRERHQETMLLGEAFLAAARAWPDEVFRRLPDKVAYPIAVGAVTGAHGIRPEKALAAFLHAYVSQAVSSGIRLGVAGQRDGVAILAGLEDHITEVARRAAASTLDDLGSATVQADIASLRHETQATRLFRS.

Belongs to the UreF family. As to quaternary structure, ureD, UreF and UreG form a complex that acts as a GTP-hydrolysis-dependent molecular chaperone, activating the urease apoprotein by helping to assemble the nickel containing metallocenter of UreC. The UreE protein probably delivers the nickel.

Its subcellular location is the cytoplasm. In terms of biological role, required for maturation of urease via the functional incorporation of the urease nickel metallocenter. This chain is Urease accessory protein UreF, found in Rhizobium johnstonii (strain DSM 114642 / LMG 32736 / 3841) (Rhizobium leguminosarum bv. viciae).